The primary structure comprises 212 residues: Peptide methionine sulfoxide reductase MsrA (212 aa).

Residue Cys-52 is part of the active site.

This sequence belongs to the MsrA Met sulfoxide reductase family.

The enzyme catalyses L-methionyl-[protein] + [thioredoxin]-disulfide + H2O = L-methionyl-(S)-S-oxide-[protein] + [thioredoxin]-dithiol. The catalysed reaction is [thioredoxin]-disulfide + L-methionine + H2O = L-methionine (S)-S-oxide + [thioredoxin]-dithiol. In terms of biological role, has an important function as a repair enzyme for proteins that have been inactivated by oxidation. Catalyzes the reversible oxidation-reduction of methionine sulfoxide in proteins to methionine. The protein is Peptide methionine sulfoxide reductase MsrA of Escherichia coli O127:H6 (strain E2348/69 / EPEC).